A 147-amino-acid chain; its full sequence is Small nuclear ribonucleoprotein-associated protein B (147 aa).

The 84-residue stretch at 1 to 84 (MGTTKMVSLL…IVSLSVQGPP (84 aa)) folds into the Sm domain. Disordered stretches follow at residues 87 to 106 (DPSMRGSLLSGPGVARPAGR) and 128 to 147 (APPPPAGFGRGAPPPGFRPV).

The protein belongs to the snRNP SmB/SmN family. In terms of assembly, belongs to the 40S cdc5-associated complex (or cwf complex), a spliceosome sub-complex reminiscent of a late-stage spliceosome composed of the U2, U5 and U6 snRNAs and at least brr2, cdc5, cwf2/prp3, cwf3/syf1, cwf4/syf3, cwf5/ecm2, spp42/cwf6, cwf7/spf27, cwf8, cwf9, cwf10, cwf11, cwf12, prp45/cwf13, cwf14, cwf15, cwf16, cwf17, cwf18, cwf19, cwf20, cwf21, cwf22, cwf23, cwf24, cwf25, cwf26, cyp7/cwf27, cwf28, cwf29/ist3, lea1, msl1, prp5/cwf1, prp10, prp12/sap130, prp17, prp22, sap61, sap62, sap114, sap145, slu7, smb1, smd1, smd3, smf1, smg1 and syf2.

The protein resides in the nucleus. Its subcellular location is the cytoplasm. Its function is as follows. Plays a role in pre-mRNA splicing as a core component of the spliceosomal U1, U2, U4 and U5 small nuclear ribonucleoproteins (snRNPs), the building blocks of the spliceosome. The polypeptide is Small nuclear ribonucleoprotein-associated protein B (smb1) (Schizosaccharomyces pombe (strain 972 / ATCC 24843) (Fission yeast)).